Consider the following 353-residue polypeptide: Transcription factor MafA (353 aa).

Ser14 carries the post-translational modification Phosphoserine. Residue Lys32 forms a Glycyl lysine isopeptide (Lys-Gly) (interchain with G-Cter in SUMO2) linkage. Disordered regions lie at residues 40–108 (RFCH…GGTS) and 177–219 (ADDM…GAGH). Low complexity predominate over residues 46-73 (PPGSLSSTPLSTPCSSVPSSPSFCAPSP). Residue Ser49 is modified to Phosphoserine. Residues Thr53 and Thr57 each carry the phosphothreonine modification. Residues Ser61 and Ser65 each carry the phosphoserine modification. Over residues 74 to 93 (GTGGGGGAGGGGGSSQAGGA) the composition is skewed to gly residues. The span at 183-210 (GHHHGAHHAAHHHHAAHHHHHHHHHHGG) shows a compositional bias: basic residues. Positions 254–279 (RLKQKRRTLKNRGYAQSCRFKRVQQR) are basic motif. In terms of domain architecture, bZIP spans 254 to 317 (RLKQKRRTLK…DLYKEKYEKL (64 aa)). The segment at 282-303 (LESEKCQLQSQVEQLKLEVGRL) is leucine-zipper. The interval 315–353 (EKLAGRGGPGSAGGAGFPREPSPPQAGPGGAKGTADFFL) is disordered. Over residues 319–330 (GRGGPGSAGGAG) the composition is skewed to gly residues.

The protein belongs to the bZIP family. Maf subfamily. In terms of assembly, forms homodimers or heterodimers. Monomers and dimers are able to bind DNA, but the off-rate is faster for monomers. Interacts with NEUROD1 and PDX1. May interact with MAFB, FOS, JUN and PCAF. In terms of processing, ubiquitinated, leading to its degradation by the proteasome. Post-translationally, phosphorylated at tyrosines. Expressed in the islets of Langerhans (at protein level).

It is found in the nucleus. Transcription factor that activates insulin gene expression. Acts synergistically with NEUROD1/BETA2 and PDX1. Binds the insulin enhancer C1/RIPE3b element. Binds to consensus TRE-type MARE 5'-TGCTGACTCAGCA-3' DNA sequence. This chain is Transcription factor MafA (MAFA), found in Homo sapiens (Human).